We begin with the raw amino-acid sequence, 564 residues long: Dihydroxy-acid dehydratase (564 aa).

Residue D80 coordinates Mg(2+). C121 lines the [2Fe-2S] cluster pocket. Residues D122 and K123 each contribute to the Mg(2+) site. Residue K123 is modified to N6-carboxylysine. C194 contacts [2Fe-2S] cluster. E447 lines the Mg(2+) pocket. S473 serves as the catalytic Proton acceptor.

The protein belongs to the IlvD/Edd family. Homodimer. [2Fe-2S] cluster is required as a cofactor. Mg(2+) serves as cofactor.

It catalyses the reaction (2R)-2,3-dihydroxy-3-methylbutanoate = 3-methyl-2-oxobutanoate + H2O. It carries out the reaction (2R,3R)-2,3-dihydroxy-3-methylpentanoate = (S)-3-methyl-2-oxopentanoate + H2O. The protein operates within amino-acid biosynthesis; L-isoleucine biosynthesis; L-isoleucine from 2-oxobutanoate: step 3/4. It participates in amino-acid biosynthesis; L-valine biosynthesis; L-valine from pyruvate: step 3/4. Its function is as follows. Functions in the biosynthesis of branched-chain amino acids. Catalyzes the dehydration of (2R,3R)-2,3-dihydroxy-3-methylpentanoate (2,3-dihydroxy-3-methylvalerate) into 2-oxo-3-methylpentanoate (2-oxo-3-methylvalerate) and of (2R)-2,3-dihydroxy-3-methylbutanoate (2,3-dihydroxyisovalerate) into 2-oxo-3-methylbutanoate (2-oxoisovalerate), the penultimate precursor to L-isoleucine and L-valine, respectively. The sequence is that of Dihydroxy-acid dehydratase from Listeria welshimeri serovar 6b (strain ATCC 35897 / DSM 20650 / CCUG 15529 / CIP 8149 / NCTC 11857 / SLCC 5334 / V8).